The sequence spans 382 residues: Nonsense-mediated mRNA decay factor SMG9 (382 aa).

A disordered region spans residues 1–66 (MKKVEILKTP…PDSSVSKSSG (66 aa)).

This sequence belongs to the SMG9 family.

Involved in nonsense-mediated decay (NMD) of mRNAs containing premature stop codons. Probable component of kinase complex containing smg-1 and recruited to stalled ribosomes. The chain is Nonsense-mediated mRNA decay factor SMG9 (smg-9) from Caenorhabditis briggsae.